The chain runs to 441 residues: Proline--tRNA ligase (441 aa).

The protein belongs to the class-II aminoacyl-tRNA synthetase family. ProS type 2 subfamily. Homodimer.

Its subcellular location is the cytoplasm. The enzyme catalyses tRNA(Pro) + L-proline + ATP = L-prolyl-tRNA(Pro) + AMP + diphosphate. Its function is as follows. Catalyzes the attachment of proline to tRNA(Pro) in a two-step reaction: proline is first activated by ATP to form Pro-AMP and then transferred to the acceptor end of tRNA(Pro). This is Proline--tRNA ligase from Bartonella tribocorum (strain CIP 105476 / IBS 506).